A 644-amino-acid chain; its full sequence is Beta-mannosyltransferase 2 (644 aa).

At 1 to 6 the chain is on the cytoplasmic side; it reads MRTRLN. The helical transmembrane segment at 7 to 27 threads the bilayer; sequence FLLLCIASVLSVIWIGVLLTW. At 28–644 the chain is on the extracellular side; the sequence is NDNNLGGISL…NDKKDLKIRQ (617 aa). Asn-484 is a glycosylation site (N-linked (GlcNAc...) asparagine). Residues 512-644 are a coiled coil; sequence TRGEAERRRR…NDKKDLKIRQ (133 aa). Positions 517 to 644 are disordered; it reads ERRRRVAEER…NDKKDLKIRQ (128 aa).

This sequence belongs to the BMT family.

Its subcellular location is the membrane. Beta-mannosyltransferase involved in cell wall biosynthesis. Initiates the beta-mannosylation of core N-linked glycans. This Komagataella phaffii (strain GS115 / ATCC 20864) (Yeast) protein is Beta-mannosyltransferase 2 (BMT2).